The following is a 585-amino-acid chain: Formate--tetrahydrofolate ligase (585 aa).

65–72 (TPHGEGKT) serves as a coordination point for ATP.

Belongs to the formate--tetrahydrofolate ligase family.

The catalysed reaction is (6S)-5,6,7,8-tetrahydrofolate + formate + ATP = (6R)-10-formyltetrahydrofolate + ADP + phosphate. It participates in one-carbon metabolism; tetrahydrofolate interconversion. This chain is Formate--tetrahydrofolate ligase, found in Shewanella baltica (strain OS155 / ATCC BAA-1091).